Here is a 71-residue protein sequence, read N- to C-terminus: Antitoxin VapB26 (71 aa).

Antitoxin component of a type II toxin-antitoxin (TA) system. Upon expression in M.smegmatis neutralizes the effect of cognate toxin VapC26. This Mycobacterium tuberculosis (strain ATCC 25618 / H37Rv) protein is Antitoxin VapB26 (vapB26).